The following is a 109-amino-acid chain: C-X-C motif chemokine 13 (109 aa).

The signal sequence occupies residues 1 to 22 (MKFISTSLLLMLLVSSLSPVQG). 2 disulfides stabilise this stretch: Cys-33–Cys-60 and Cys-35–Cys-76.

It belongs to the intercrine alpha (chemokine CxC) family. In terms of tissue distribution, highest levels in liver, followed by spleen, lymph node, appendix and stomach. Low levels in salivary gland, mammary gland and fetal spleen.

It localises to the secreted. In terms of biological role, chemotactic for B-lymphocytes but not for T-lymphocytes, monocytes and neutrophils. Does not induce calcium release in B-lymphocytes. Binds to BLR1/CXCR5. This Homo sapiens (Human) protein is C-X-C motif chemokine 13 (CXCL13).